Consider the following 154-residue polypeptide: Ubiquitin-conjugating enzyme E2 L3 (154 aa).

Residues 2-149 enclose the UBC core domain; sequence AASRRLMKEL…AEEFTKKYGE (148 aa). Cys86 serves as the catalytic Glycyl thioester intermediate. At Lys131 the chain carries N6-acetyllysine.

It belongs to the ubiquitin-conjugating enzyme family. Interacts with PRKN; involved in ubiquitination and degradation of misfolded proteins. Interacts with UBE3A. Interacts with CCNB1IP1, CBL, ZAP70, RNF19A, RNF19B and RNF144B. Interacts with ARIH1. Interacts with ARIH2 (via RING-type 1). Interacts with NCOA1; they functionally interact to regulate progesterone receptor transcriptional activity. Interacts with NDFIP1 (via N-terminus); the interaction mediates recruitment of UBE2L3 to ITCH and causes MAP3K7 ubiquitination. Ubiquitinated. The alteration of UBE2L3 protein levels during the S-phase of the cell cycle is due to ubiquitin-dependent proteasomal degradation. Autoubiquitinated in vitro.

The protein localises to the nucleus. It localises to the cytoplasm. The enzyme catalyses S-ubiquitinyl-[E1 ubiquitin-activating enzyme]-L-cysteine + [E2 ubiquitin-conjugating enzyme]-L-cysteine = [E1 ubiquitin-activating enzyme]-L-cysteine + S-ubiquitinyl-[E2 ubiquitin-conjugating enzyme]-L-cysteine.. Its pathway is protein modification; protein ubiquitination. Ubiquitin-conjugating enzyme E2 that specifically acts with HECT-type and RBR family E3 ubiquitin-protein ligases. Does not function with most RING-containing E3 ubiquitin-protein ligases because it lacks intrinsic E3-independent reactivity with lysine: in contrast, it has activity with the RBR family E3 enzymes, such as PRKN, RNF31 and ARIH1, that function like RING-HECT hybrids. Accepts ubiquitin from the E1 complex and catalyzes its covalent attachment to other proteins. Mediates ubiquitination by the CUL9-RBX1 complex. In vitro catalyzes 'Lys-11'-linked polyubiquitination. Involved in the selective degradation of short-lived and abnormal proteins. Down-regulated during the S-phase it is involved in progression through the cell cycle. Regulates nuclear hormone receptors transcriptional activity. May play a role in myelopoiesis. The chain is Ubiquitin-conjugating enzyme E2 L3 (UBE2L3) from Bos taurus (Bovine).